Here is a 211-residue protein sequence, read N- to C-terminus: 3,4-dihydroxy-2-butanone 4-phosphate synthase (211 aa).

D-ribulose 5-phosphate-binding positions include 37–38, D42, 150–154, and E174; these read RE and RGGHT. A Mg(2+)-binding site is contributed by E38. Residue H153 participates in Mg(2+) binding.

Belongs to the DHBP synthase family. In terms of assembly, homodimer. The cofactor is Mg(2+). Mn(2+) is required as a cofactor.

The catalysed reaction is D-ribulose 5-phosphate = (2S)-2-hydroxy-3-oxobutyl phosphate + formate + H(+). Its pathway is cofactor biosynthesis; riboflavin biosynthesis; 2-hydroxy-3-oxobutyl phosphate from D-ribulose 5-phosphate: step 1/1. Functionally, catalyzes the conversion of D-ribulose 5-phosphate to formate and 3,4-dihydroxy-2-butanone 4-phosphate. The sequence is that of 3,4-dihydroxy-2-butanone 4-phosphate synthase from Baumannia cicadellinicola subsp. Homalodisca coagulata.